Reading from the N-terminus, the 407-residue chain is Putative polysaccharide ligase RF_0568 (407 aa).

10 consecutive transmembrane segments (helical) span residues Leu-15–Phe-35, Met-71–Ile-91, Phe-100–Gly-120, Leu-129–Phe-149, Gly-166–Lys-186, Ile-203–Ala-223, Ile-229–Ala-249, Leu-272–Phe-292, Ile-324–Tyr-344, and Ile-379–Val-399.

It belongs to the O-antigen ligase family.

It localises to the membrane. In Rickettsia felis (strain ATCC VR-1525 / URRWXCal2) (Rickettsia azadi), this protein is Putative polysaccharide ligase RF_0568.